An 885-amino-acid chain; its full sequence is Cadherin-1 (885 aa).

The signal sequence occupies residues 1–26; that stretch reads MGPRYGGAPALLLPLLLLLQVSSGLC. The propeptide occupies 27-156; it reads QEPEPCRPGF…SQHGLRRQKR (130 aa). Residues 121–131 show a composition bias toward basic residues; that stretch reads KAATHHHHHHH. Residues 121 to 141 form a disordered region; it reads KAATHHHHHHHDAPSKTQTEV. The Extracellular portion of the chain corresponds to 157 to 712; sequence DWVIPPISCP…YAEAGLQVPA (556 aa). Cadherin domains are found at residues 158 to 264, 265 to 377, 378 to 488, 489 to 597, and 607 to 688; these read WVIP…KPEF, TQAV…PPIF, NPTT…APIF, IPCP…GPIP, and KNPQ…VFVC. Asp-259 provides a ligand contact to Ca(2+). O-linked (Man...) serine glycosylation occurs at Ser-282. Thr-287 carries O-linked (Man...) threonine glycosylation. Asp-290 is a Ca(2+) binding site. O-linked (Man...) threonine glycans are attached at residues Thr-360, Thr-472, Thr-474, and Thr-511. Residue Asn-560 is glycosylated (N-linked (GlcNAc...) asparagine). O-linked (Man...) threonine glycans are attached at residues Thr-578, Thr-580, and Thr-582. A glycan (N-linked (GlcNAc...) asparagine) is linked at Asn-639. The helical transmembrane segment at 713-733 threads the bilayer; that stretch reads ILGILGGILALLILILLLLLF. Over 734-885 the chain is Cytoplasmic; that stretch reads VRRRRVVKEP…ADMYGGGEDD (152 aa). Residues 750–770 are disordered; the sequence is DTRDNVYYYDEEGGGEEDQDF. Residues Tyr-756, Tyr-757, and Tyr-758 each carry the phosphotyrosine; by SRC modification. Positions 758–770 are enriched in acidic residues; the sequence is YDEEGGGEEDQDF. Positions 761 to 772 are required for binding CTNND1 and PSEN1; sequence EGGGEEDQDFDL. A phosphoserine mark is found at Ser-773, Ser-796, Ser-841, Ser-843, and Ser-849. Residues 792-811 are disordered; it reads PTLLSVPQYRPRPANPDEIG. A required for binding alpha, beta and gamma catenins region spans residues 814 to 885; sequence IDENLKAADT…ADMYGGGEDD (72 aa).

Homodimer; disulfide-linked. Component of an E-cadherin/ catenin adhesion complex composed of at least E-cadherin/CDH1, beta-catenin/CTNNB1 or gamma-catenin/JUP, and potentially alpha-catenin/CTNNA1; the complex is located to adherens junctions. Found in a complex composed of CDH1, RAP1A and PKP3; PKP3 acts as a scaffold protein within the complex, the complex is required for CDH1 localization to mature desmosome cell junctions. Interacts with the TRPV4 and CTNNB1 complex. Interacts with CTNND1. The stable association of CTNNA1 is controversial as CTNNA1 was shown not to bind to F-actin when assembled in the complex. Alternatively, the CTNNA1-containing complex may be linked to F-actin by other proteins such as LIMA1. Interaction with PSEN1, cleaves CDH1 resulting in the disassociation of cadherin-based adherens junctions (CAJs). Interacts with AJAP1 and DLGAP5. Interacts with TBC1D2. Interacts with LIMA1. Interacts with CAV1. Interacts with PIP5K1C. Interacts with RAB8B. Interacts with DDR1; this stabilizes CDH1 at the cell surface and inhibits its internalization. Interacts with RAPGEF2. Interacts with KLRG1. Forms a ternary complex composed of ADAM10, CADH1 and EPHA4; within the complex, CADH1 is cleaved by ADAM10 which disrupts adherens junctions. Interacts with SPEF1. Interacts with CTNNB1 and PKP2. Interacts with AMOTL2; the interaction may facilitate binding of radial actin fibers to cell junction complexes. Interacts with DSG3; the interaction is required for CDH1 localization to developing adherens junctions. Post-translationally, during apoptosis or with calcium influx, cleaved by a membrane-bound metalloproteinase (ADAM10), PS1/gamma-secretase and caspase-3. Processing by the metalloproteinase, induced by calcium influx, causes disruption of cell-cell adhesion and the subsequent release of beta-catenin into the cytoplasm. The residual membrane-tethered cleavage product is rapidly degraded via an intracellular proteolytic pathway. Cleavage by caspase-3 releases the cytoplasmic tail resulting in disintegration of the actin microfilament system. The gamma-secretase-mediated cleavage promotes disassembly of adherens junctions. During development of the cochlear organ of Corti, cleavage by ADAM10 at adherens junctions promotes pillar cell separation. N-glycosylation at Asn-639 is essential for expression, folding and trafficking. Addition of bisecting N-acetylglucosamine by MGAT3 modulates its cell membrane location. In terms of processing, ubiquitinated by a SCF complex containing SKP2, which requires prior phosphorylation by CK1/CSNK1A1. Ubiquitinated by CBLL1/HAKAI, requires prior phosphorylation at Tyr-757. Post-translationally, O-glycosylated. O-manosylated by TMTC1, TMTC2, TMTC3 or TMTC4. Thr-287 and Thr-511 are O-mannosylated by TMTC2 or TMTC4 but not TMTC1 or TMTC3.

It localises to the cell junction. Its subcellular location is the adherens junction. It is found in the cell membrane. The protein resides in the endosome. The protein localises to the golgi apparatus. It localises to the trans-Golgi network. Its subcellular location is the cytoplasm. It is found in the desmosome. Cadherins are calcium-dependent cell adhesion proteins. They preferentially interact with themselves in a homophilic manner in connecting cells; cadherins may thus contribute to the sorting of heterogeneous cell types. CDH1 is involved in mechanisms regulating cell-cell adhesions, mobility and proliferation of epithelial cells. Promotes organization of radial actin fiber structure and cellular response to contractile forces, via its interaction with AMOTL2 which facilitates anchoring of radial actin fibers to CDH1 junction complexes at the cell membrane. Plays a role in the early stages of desmosome cell-cell junction formation via facilitating the recruitment of DSG2 and DSP to desmosome plaques. Has a potent invasive suppressor role. It is a ligand for integrin alpha-E/beta-7. In terms of biological role, E-Cad/CTF2 promotes non-amyloidogenic degradation of Abeta precursors. Has a strong inhibitory effect on APP C99 and C83 production. The chain is Cadherin-1 (CDH1) from Canis lupus familiaris (Dog).